The primary structure comprises 112 residues: MGVEKQIIRAGTGPNPSRGQNVTVHCTGYGKNGDLSQKFWSTKDPGQNPFTFKIGQGSVIKGWDEGVLGMQLGEVARLRCSPDYAYGAGGFPAWGIQPNSVLEFEIEVLRAQ.

The disordered stretch occupies residues 1–22; it reads MGVEKQIIRAGTGPNPSRGQNV. The PPIase FKBP-type domain maps to 19–112; it reads GQNVTVHCTG…EFEIEVLRAQ (94 aa). Cys-26 and Cys-80 are joined by a disulfide.

Belongs to the FKBP-type PPIase family. As to quaternary structure, interacts with FK506.

Its subcellular location is the cytoplasm. It catalyses the reaction [protein]-peptidylproline (omega=180) = [protein]-peptidylproline (omega=0). PPIases accelerate the folding of proteins. It catalyzes the cis-trans isomerization of proline imidic peptide bonds in oligopeptides. The protein is Peptidyl-prolyl cis-trans isomerase FKBP12 (FKBP12) of Vicia faba (Broad bean).